Consider the following 519-residue polypeptide: Cobyric acid synthase (519 aa).

The GATase cobBQ-type domain maps to 256 to 438; the sequence is WLRVAVPRLP…WHGLFENDAF (183 aa). The active-site Nucleophile is the Cys-337. His-430 is a catalytic residue.

This sequence belongs to the CobB/CobQ family. CobQ subfamily.

It functions in the pathway cofactor biosynthesis; adenosylcobalamin biosynthesis. Catalyzes amidations at positions B, D, E, and G on adenosylcobyrinic A,C-diamide. NH(2) groups are provided by glutamine, and one molecule of ATP is hydrogenolyzed for each amidation. The sequence is that of Cobyric acid synthase from Saccharopolyspora erythraea (strain ATCC 11635 / DSM 40517 / JCM 4748 / NBRC 13426 / NCIMB 8594 / NRRL 2338).